The primary structure comprises 562 residues: Potassium-transporting ATPase potassium-binding subunit (562 aa).

Helical transmembrane passes span 5-25, 63-83, 132-152, 175-195, 250-270, 279-299, 327-347, 356-376, 379-399, 416-436, 483-503, and 526-546; these read AFLLIFGLLLTVLIVAQPLGS, AAAILTLNLIGIVVLFVLLMA, GLTVQNFLAAASGIAVAFALI, LYVLLPLSLLLALFFVSQGVL, LSNIVQMLAILLIPTALCFAF, QGHALLWAMGLIFIVAAAVVM, FGVLTSSLYAVVTTATSTGAV, ALGGMVPMWLMQIGEVVFGGV, GLYGMLLFVLLTVFIAGLMIG, MTALAILIPPALVLLGTALAL, VLLAVAMLLGRFAVMVPVLAI, and LFIGMLIAIVLLIGALTFIPA.

The protein belongs to the KdpA family. The system is composed of three essential subunits: KdpA, KdpB and KdpC.

It localises to the cell inner membrane. In terms of biological role, part of the high-affinity ATP-driven potassium transport (or Kdp) system, which catalyzes the hydrolysis of ATP coupled with the electrogenic transport of potassium into the cytoplasm. This subunit binds the periplasmic potassium ions and delivers the ions to the membrane domain of KdpB through an intramembrane tunnel. This Pectobacterium carotovorum subsp. carotovorum (strain PC1) protein is Potassium-transporting ATPase potassium-binding subunit.